The following is a 217-amino-acid chain: Acyl-homoserine-lactone synthase (217 aa).

This sequence belongs to the autoinducer synthase family.

It carries out the reaction a fatty acyl-[ACP] + S-adenosyl-L-methionine = an N-acyl-L-homoserine lactone + S-methyl-5'-thioadenosine + holo-[ACP] + H(+). Functionally, required for the synthesis of OHHL (N-(3-oxohexanoyl)-L-homoserine lactone), an autoinducer molecule which binds to ExpR and thus acts in virulence (soft rot disease) through the activation of genes for plant tissue macerating enzymes. The polypeptide is Acyl-homoserine-lactone synthase (expI) (Pectobacterium parmentieri).